We begin with the raw amino-acid sequence, 271 residues long: Glutamate racemase (271 aa).

Residues 9-10 and 41-42 contribute to the substrate site; these read DS and YG. Cys72 functions as the Proton donor/acceptor in the catalytic mechanism. A substrate-binding site is contributed by 73 to 74; the sequence is NT. Cys183 serves as the catalytic Proton donor/acceptor. 184-185 contributes to the substrate binding site; it reads TH.

It belongs to the aspartate/glutamate racemases family.

The catalysed reaction is L-glutamate = D-glutamate. It participates in cell wall biogenesis; peptidoglycan biosynthesis. In terms of biological role, provides the (R)-glutamate required for cell wall biosynthesis. The protein is Glutamate racemase of Exiguobacterium sibiricum (strain DSM 17290 / CCUG 55495 / CIP 109462 / JCM 13490 / 255-15).